The sequence spans 314 residues: Small ribosomal subunit biogenesis GTPase RsgA (314 aa).

A disordered region spans residues 1–21 (MKRAPTKQPAKPAARGGERAQ). Positions 85 to 246 (SDQFKSKLFA…LIDSPGFQEF (162 aa)) constitute a CP-type G domain. Residues 134–137 (NKID) and 188–196 (GQSGMGKST) contribute to the GTP site. Residues Cys-270, Cys-275, His-277, and Cys-283 each contribute to the Zn(2+) site.

This sequence belongs to the TRAFAC class YlqF/YawG GTPase family. RsgA subfamily. As to quaternary structure, monomer. Associates with 30S ribosomal subunit, binds 16S rRNA. It depends on Zn(2+) as a cofactor.

It localises to the cytoplasm. Functionally, one of several proteins that assist in the late maturation steps of the functional core of the 30S ribosomal subunit. Helps release RbfA from mature subunits. May play a role in the assembly of ribosomal proteins into the subunit. Circularly permuted GTPase that catalyzes slow GTP hydrolysis, GTPase activity is stimulated by the 30S ribosomal subunit. The sequence is that of Small ribosomal subunit biogenesis GTPase RsgA from Burkholderia mallei (strain ATCC 23344).